The following is a 490-amino-acid chain: Cytochrome P450 71D11 (490 aa).

Residue C427 coordinates heme.

The protein belongs to the cytochrome P450 family. The cofactor is heme.

The sequence is that of Cytochrome P450 71D11 (CYP71D11) from Lotus japonicus (Lotus corniculatus var. japonicus).